The following is a 92-amino-acid chain: Small integral membrane protein 12 (92 aa).

The helical transmembrane segment at 15-34 (YVTFPVAFVVGAVGYHLEWF) threads the bilayer.

This sequence belongs to the SMIM12 family.

The protein resides in the membrane. The chain is Small integral membrane protein 12 (SMIM12) from Nomascus leucogenys (Northern white-cheeked gibbon).